A 1410-amino-acid polypeptide reads, in one-letter code: DNA-directed RNA polymerase subunit beta' (1410 aa).

Positions 70, 72, 85, and 88 each coordinate Zn(2+). Mg(2+) contacts are provided by Asp460, Asp462, and Asp464. Residues Cys814, Cys888, Cys895, and Cys898 each contribute to the Zn(2+) site.

This sequence belongs to the RNA polymerase beta' chain family. As to quaternary structure, the RNAP catalytic core consists of 2 alpha, 1 beta, 1 beta' and 1 omega subunit. When a sigma factor is associated with the core the holoenzyme is formed, which can initiate transcription. Mg(2+) serves as cofactor. Zn(2+) is required as a cofactor.

The enzyme catalyses RNA(n) + a ribonucleoside 5'-triphosphate = RNA(n+1) + diphosphate. In terms of biological role, DNA-dependent RNA polymerase catalyzes the transcription of DNA into RNA using the four ribonucleoside triphosphates as substrates. This chain is DNA-directed RNA polymerase subunit beta', found in Saccharophagus degradans (strain 2-40 / ATCC 43961 / DSM 17024).